A 195-amino-acid chain; its full sequence is Thymidine kinase (195 aa).

Residues Gly15–Ser22 and Asp88–Gln91 each bind ATP. Glu89 (proton acceptor) is an active-site residue. Phe120 contacts substrate. Cys145 and Cys148 together coordinate Zn(2+). Substrate-binding positions include Ile170–Gly174 and Tyr179. Zn(2+) is bound by residues Cys183 and Cys186.

It belongs to the thymidine kinase family. As to quaternary structure, homotetramer.

The protein resides in the cytoplasm. It carries out the reaction thymidine + ATP = dTMP + ADP + H(+). The polypeptide is Thymidine kinase (Bacillus cereus (strain ATCC 14579 / DSM 31 / CCUG 7414 / JCM 2152 / NBRC 15305 / NCIMB 9373 / NCTC 2599 / NRRL B-3711)).